Consider the following 334-residue polypeptide: Ketol-acid reductoisomerase (NADP(+)) (334 aa).

The KARI N-terminal Rossmann domain occupies 1–181 (MTTVYYDQDV…GATRAGVIET (181 aa)). NADP(+)-binding positions include 25–28 (YGSQ), Arg-48, Ser-52, and 82–85 (DEIQ). His-107 is a catalytic residue. Gly-133 lines the NADP(+) pocket. Residues 182–327 (TFKEETETDL…RELREMMPFI (146 aa)) enclose the KARI C-terminal knotted domain. 4 residues coordinate Mg(2+): Asp-190, Glu-194, Glu-226, and Glu-230. Ser-251 is a binding site for substrate.

It belongs to the ketol-acid reductoisomerase family. Mg(2+) is required as a cofactor.

The enzyme catalyses (2R)-2,3-dihydroxy-3-methylbutanoate + NADP(+) = (2S)-2-acetolactate + NADPH + H(+). The catalysed reaction is (2R,3R)-2,3-dihydroxy-3-methylpentanoate + NADP(+) = (S)-2-ethyl-2-hydroxy-3-oxobutanoate + NADPH + H(+). The protein operates within amino-acid biosynthesis; L-isoleucine biosynthesis; L-isoleucine from 2-oxobutanoate: step 2/4. It participates in amino-acid biosynthesis; L-valine biosynthesis; L-valine from pyruvate: step 2/4. Involved in the biosynthesis of branched-chain amino acids (BCAA). Catalyzes an alkyl-migration followed by a ketol-acid reduction of (S)-2-acetolactate (S2AL) to yield (R)-2,3-dihydroxy-isovalerate. In the isomerase reaction, S2AL is rearranged via a Mg-dependent methyl migration to produce 3-hydroxy-3-methyl-2-ketobutyrate (HMKB). In the reductase reaction, this 2-ketoacid undergoes a metal-dependent reduction by NADPH to yield (R)-2,3-dihydroxy-isovalerate. The protein is Ketol-acid reductoisomerase (NADP(+)) of Staphylococcus aureus (strain MSSA476).